Here is a 355-residue protein sequence, read N- to C-terminus: Peptide chain release factor 1 (355 aa).

Glutamine 233 is subject to N5-methylglutamine. Residues 280 to 293 (ERRKKEQERADSRR) are compositionally biased toward basic and acidic residues. The interval 280 to 308 (ERRKKEQERADSRRGQVGSGDRSERIRTY) is disordered.

This sequence belongs to the prokaryotic/mitochondrial release factor family. In terms of processing, methylated by PrmC. Methylation increases the termination efficiency of RF1.

The protein localises to the cytoplasm. In terms of biological role, peptide chain release factor 1 directs the termination of translation in response to the peptide chain termination codons UAG and UAA. The protein is Peptide chain release factor 1 of Rickettsia peacockii (strain Rustic).